A 66-amino-acid polypeptide reads, in one-letter code: Alpha-conotoxin RegIIA (66 aa).

An N-terminal signal peptide occupies residues 1-21 (MGMRMMFTVFLLVVLTTTVVS). A propeptide spanning residues 22–49 (STSVRASDGRNAAADNRASDLIAQIVRR) is cleaved from the precursor. 2 cysteine pairs are disulfide-bonded: C51/C57 and C52/C65. Residues 53–55 (SHP) form a ser-Xaa-Pro motif, crucial for potent interaction with nAChR region. Residue C65 is modified to Cysteine amide.

This sequence belongs to the conotoxin A superfamily. As to expression, expressed by the venom duct.

It is found in the secreted. Alpha-conotoxins act on postsynaptic membranes, they bind to the nicotinic acetylcholine receptors (nAChR) and thus inhibit them. This toxin potently inhibits alpha-3 containing subunit nAChR. It inhibits alpha-3-beta-2/CHRNA3-CHRNB2 (IC(50)=10.7-33 nM (rat)/132.4-704.1 nM (human)) and alpha-3-beta-4/CHRNA3-CHRNB4 (IC(50)=47.3-97 nM (rat)/52.1 nM (human)). It also inhibits alpha-7/CHRNA7 nAChR with IC(50)=103-210 nM (human)/41-61.2 nM (rat) nAChRs. It is more potent on alpha-3-beta-2 receptors in human than in rat, due to a variation (Pro vs Gln) in alpha-3 subunit in these orthologs. Conversely, does not show species-specific differences in sensitivity at the alpha-3-beta-4 receptor. The sequence is that of Alpha-conotoxin RegIIA from Conus regius (Crown cone).